Here is a 435-residue protein sequence, read N- to C-terminus: Adenylosuccinate synthetase (435 aa).

GTP is bound by residues 13 to 19 and 41 to 43; these read GDEGKGK and GHT. Asp14 serves as the catalytic Proton acceptor. Residues Asp14 and Gly41 each contribute to the Mg(2+) site. IMP is bound by residues 14-17, 39-42, Thr130, Arg144, Gln225, Thr240, and Arg304; these read DEGK and NAGH. The Proton donor role is filled by His42. 300-306 lines the substrate pocket; sequence ATTGRPR. GTP is bound by residues Arg306, 332-334, and 419-421; these read KLD and STG.

Belongs to the adenylosuccinate synthetase family. Homodimer. It depends on Mg(2+) as a cofactor.

It is found in the cytoplasm. The enzyme catalyses IMP + L-aspartate + GTP = N(6)-(1,2-dicarboxyethyl)-AMP + GDP + phosphate + 2 H(+). It participates in purine metabolism; AMP biosynthesis via de novo pathway; AMP from IMP: step 1/2. Its function is as follows. Plays an important role in the de novo pathway of purine nucleotide biosynthesis. Catalyzes the first committed step in the biosynthesis of AMP from IMP. This chain is Adenylosuccinate synthetase, found in Nitrosospira multiformis (strain ATCC 25196 / NCIMB 11849 / C 71).